The primary structure comprises 298 residues: Probable alpha-L-glutamate ligase 2 (298 aa).

One can recognise an ATP-grasp domain in the interval 104–287; that stretch reads MQLLSRQGIG…VADAIICFME (184 aa). ATP is bound by residues Lys-141, 178–179, Asp-187, and 211–213; these read EY and RSN. Mg(2+) contacts are provided by Asp-248, Glu-260, and Asn-262. The Mn(2+) site is built by Asp-248, Glu-260, and Asn-262.

The protein belongs to the RimK family. The cofactor is Mg(2+). It depends on Mn(2+) as a cofactor.

The protein is Probable alpha-L-glutamate ligase 2 of Shewanella frigidimarina (strain NCIMB 400).